The primary structure comprises 60 residues: Large ribosomal subunit protein bL32 (60 aa).

The tract at residues 1–46 is disordered; sequence MAVQQNKKSPSKRGMHRSHNALNTPGTAIEPTTGEVHLRHHISPTG. Over residues 9-19 the composition is skewed to basic residues; it reads SPSKRGMHRSH.

It belongs to the bacterial ribosomal protein bL32 family.

This chain is Large ribosomal subunit protein bL32, found in Leptothrix cholodnii (strain ATCC 51168 / LMG 8142 / SP-6) (Leptothrix discophora (strain SP-6)).